Consider the following 114-residue polypeptide: MKTIIVFLSLLVLATKFGDANEGVNQEQMKEVIQNEFREDFLNEMAAMSLLQQLEAIESTLLEKEADRNSRQKRCLGENVPCGDFPCCGKLVCQKTFGYGWLYKSPYCVKPSNG.

Positions 1 to 20 (MKTIIVFLSLLVLATKFGDA) are cleaved as a signal peptide. Residues 21–74 (NEGVNQEQMKEVIQNEFREDFLNEMAAMSLLQQLEAIESTLLEKEADRNSRQKR) constitute a propeptide that is removed on maturation. Intrachain disulfides connect Cys-75/Cys-88, Cys-82/Cys-93, and Cys-87/Cys-108.

This sequence belongs to the neurotoxin 14 (magi-1) family. 03 (ICK-30-40) subfamily. Expressed by the venom gland.

Its subcellular location is the secreted. Its function is as follows. Ion channel inhibitor. The protein is U17-barytoxin-Tl1a of Trittame loki (Brush-footed trapdoor spider).